The following is a 369-amino-acid chain: 3,7-dimethylxanthine N-methyltransferase TCS1 (369 aa).

Y24 contacts S-adenosyl-L-homocysteine. T31 provides a ligand contact to caffeine. C66, N71, D103, L104, S138, and F139 together coordinate S-adenosyl-L-homocysteine. Caffeine-binding residues include Y156, H159, and W160. N177 serves as a coordination point for Mg(2+). R225 contributes to the caffeine binding site. Residues D263, F265, and N266 each coordinate Mg(2+). Caffeine is bound at residue F321.

It belongs to the methyltransferase superfamily. Type-7 methyltransferase family. It depends on Mg(2+) as a cofactor.

The catalysed reaction is 1,7-dimethylxanthine + S-adenosyl-L-methionine = caffeine + S-adenosyl-L-homocysteine + H(+). It catalyses the reaction theobromine + S-adenosyl-L-methionine = caffeine + S-adenosyl-L-homocysteine + H(+). It carries out the reaction 7-methylxanthine + S-adenosyl-L-methionine = theobromine + S-adenosyl-L-homocysteine + H(+). It participates in alkaloid biosynthesis. Functionally, involved in the biosynthesis of caffeine in cv. Puer. Involved in the biosynthesis of theacrine in cv. Kucha, a caffeine-like xanthine alkaloid with diverse beneficial biological activities including anti-depressive, sedative, and hypnotic activities, improving learning and memory, increasing exercise activity, and preventing nonalcoholic fatty liver disease. Catalyzes the conversion of 7-methylxanthine (7mX) to theobromine and of theobromine to caffeine. Has 3-N- and 1-N-methylation activity. The chain is 3,7-dimethylxanthine N-methyltransferase TCS1 from Camellia sinensis var. assamica (Assam tea).